The primary structure comprises 366 residues: Transcription factor MYB28 (366 aa).

HTH myb-type domains lie at 9 to 61 and 62 to 116; these read GEGL…TNYL and KPEI…KKRL. 2 DNA-binding regions (H-T-H motif) span residues 37–61 and 89–112; these read WRDIPQKAGLKRCGKSCRLRWTNYL and WSVIARHLPRRTDNEIKNYWNTHL. The segment at 124 to 170 is disordered; the sequence is VTHKPLASSSNPTVDENLNSPNASSSDKQYSRSSSMPFLSRPPPSSC. Polar residues predominate over residues 130–146; sequence ASSSNPTVDENLNSPNA. A compositionally biased stretch (low complexity) spans 147 to 158; the sequence is SSSDKQYSRSSS.

Can form complexes with MYC2, MYC3 or MYC4. As to expression, expressed in generative organs, mature leaves and trichomes.

It localises to the nucleus. Functionally, major regulator of short-chained aliphatic glucosinolates (GLSs) biosynthesis. Together with MYB29/HAG3 and MYB76/HAG2, promotes aliphatic glucosinolate biosynthesis but represses indolic glucosinolate biosynthesis. Prevents insect performance (e.g. lepidopteran insect Mamestra brassicae and Spodoptera exigua) by promoting glucosinolates. The chain is Transcription factor MYB28 (MYB28) from Arabidopsis thaliana (Mouse-ear cress).